The chain runs to 311 residues: Acetyl-coenzyme A carboxylase carboxyl transferase subunit alpha (311 aa).

The 251-residue stretch at 36–286 (KLEKEVEKTF…KEYFIKSLAE (251 aa)) folds into the CoA carboxyltransferase C-terminal domain.

This sequence belongs to the AccA family. In terms of assembly, acetyl-CoA carboxylase is a heterohexamer composed of biotin carboxyl carrier protein (AccB), biotin carboxylase (AccC) and two subunits each of ACCase subunit alpha (AccA) and ACCase subunit beta (AccD).

The protein localises to the cytoplasm. It catalyses the reaction N(6)-carboxybiotinyl-L-lysyl-[protein] + acetyl-CoA = N(6)-biotinyl-L-lysyl-[protein] + malonyl-CoA. It functions in the pathway lipid metabolism; malonyl-CoA biosynthesis; malonyl-CoA from acetyl-CoA: step 1/1. Functionally, component of the acetyl coenzyme A carboxylase (ACC) complex. First, biotin carboxylase catalyzes the carboxylation of biotin on its carrier protein (BCCP) and then the CO(2) group is transferred by the carboxyltransferase to acetyl-CoA to form malonyl-CoA. The polypeptide is Acetyl-coenzyme A carboxylase carboxyl transferase subunit alpha (Aliarcobacter butzleri (strain RM4018) (Arcobacter butzleri)).